The sequence spans 125 residues: Large ribosomal subunit protein bL12 (125 aa).

This sequence belongs to the bacterial ribosomal protein bL12 family. As to quaternary structure, homodimer. Part of the ribosomal stalk of the 50S ribosomal subunit. Forms a multimeric L10(L12)X complex, where L10 forms an elongated spine to which 2 to 4 L12 dimers bind in a sequential fashion. Binds GTP-bound translation factors.

In terms of biological role, forms part of the ribosomal stalk which helps the ribosome interact with GTP-bound translation factors. Is thus essential for accurate translation. This chain is Large ribosomal subunit protein bL12, found in Chelativorans sp. (strain BNC1).